The primary structure comprises 281 residues: Nucleotide-binding protein TRQ2_1124 (281 aa).

Position 9 to 16 (9 to 16 (GLSGAGKT)) interacts with ATP. GTP is bound at residue 58–61 (DVRS).

It belongs to the RapZ-like family.

Functionally, displays ATPase and GTPase activities. This chain is Nucleotide-binding protein TRQ2_1124, found in Thermotoga sp. (strain RQ2).